We begin with the raw amino-acid sequence, 1738 residues long: Gag-Pol polyprotein (1738 aa).

Residue glycine 2 is the site of N-myristoyl glycine; by host attachment. Residues 110–124 show a composition bias toward pro residues; it reads PPSAPSLPPEPPLST. The interval 110–218 is disordered; it reads PPSAPSLPPE…STTSQAFPLR (109 aa). Positions 111–114 match the PTAP/PSAP motif motif; the sequence is PSAP. Positions 130 to 134 match the LYPX(n)L motif motif; sequence LYPAL. Over residues 161-173 the composition is skewed to pro residues; that stretch reads DPPPYRDPGPPSP. The PPXY motif motif lies at 162-165; it reads PPPY. Serine 192 carries the phosphoserine; by host modification. Residues 345 to 393 are interaction with host PIAS4; sequence GRSPTNLAKVKGITQGPNESPSAFLERLKEAYRRYTPYDPEDPGQETNV. Positions 430-435 are interaction with host UBE2I; sequence IFNKRE. 2 stretches are compositionally biased toward basic and acidic residues: residues 434–466 and 486–499; these read RETP…EKER and RQDR…RPQL. 2 disordered regions span residues 434–499 and 513–553; these read RETP…RPQL and WARD…PRIT. The stretch at 438 to 478 forms a coiled coil; that stretch reads EEREERIRRETEEKEERRRAEDVQREKERDRRRHREMSKLL. Residues 502–519 form a CCHC-type zinc finger; the sequence is DQCAYCKEKGHWARDCPK. The Peptidase A2 domain maps to 561-631; that stretch reads VTFLVDTGAQ…CPYPLLGRDL (71 aa). Catalysis depends on aspartate 566, which acts as the Protease; shared with dimeric partner. The Reverse transcriptase domain maps to 741 to 932; sequence LDQGILVPCQ…KQVKYLGYLL (192 aa). Mg(2+)-binding residues include aspartate 809, aspartate 883, aspartate 884, aspartate 1183, glutamate 1221, aspartate 1242, and aspartate 1312. Residues 1174–1320 enclose the RNase H type-1 domain; the sequence is PDADHTWYTD…ADQAAREVAT (147 aa). The HHCC-type zinc-finger motif lies at 1387–1427; it reads HQLTHLSFSKTKALLERNYCPYYMLNRDRTLKDITETCQAC. Positions 1444–1602 constitute an Integrase catalytic domain; it reads RGHRPGTHWE…TPYEILYGAP (159 aa). The Mg(2+) site is built by aspartate 1455 and aspartate 1514.

This sequence belongs to the retroviral Pol polyprotein family. As to quaternary structure, homohexamer; further associates as homomultimer. The virus core is composed of a lattice formed from hexagonal rings, each containing six capsid monomers. Interacts (via PPXY motif) with host NEDD4. Interacts (via PSAP motif) with host TSG101. Interacts (via LYPX(n)L motif) with host PDCD6IP. In terms of assembly, the reverse transcriptase is a monomer (Potential). Interacts (via RNase domains) with host release factor ETF1; this interaction is essential for translational readthrough of amber codon between viral gag and pol genes, as well as for viral replication. As to quaternary structure, homodimer. Mg(2+) serves as cofactor. Ubiquitinated by ITCH. Gag can recruit the ubiquitin ligase Itch in an L domain-independent manner to facilitate virus release via a mechanism that involves Gag ubiquitination. In terms of processing, specific enzymatic cleavages by the viral protease yield mature proteins. The protease is released by autocatalytic cleavage. The polyprotein is cleaved during and after budding, this process is termed maturation. Post-translationally, sumoylated; which is required for virus replication. Phosphorylated on serine residues.

It localises to the virion. Its subcellular location is the host cell membrane. It is found in the host late endosome membrane. The protein localises to the host endosome. The protein resides in the host multivesicular body. It localises to the host cytoplasm. It carries out the reaction DNA(n) + a 2'-deoxyribonucleoside 5'-triphosphate = DNA(n+1) + diphosphate. The enzyme catalyses Endonucleolytic cleavage to 5'-phosphomonoester.. Most efficiently inhibited by Amprenavir, which is able to block Gag-Pol processing in infected cells. Functionally, plays a role in budding and is processed by the viral protease during virion maturation outside the cell. During budding, it recruits, in a PPXY-dependent or independent manner, Nedd4-like ubiquitin ligases that conjugate ubiquitin molecules to Gag-Pol, or to Gag-Pol binding host factors. Interaction with HECT ubiquitin ligases probably links the viral protein to the host ESCRT pathway and facilitates release. Targets Gag and gag-pol polyproteins to the plasma membrane via a multipartite membrane binding signal, that includes its myristoylated N-terminus. Also mediates nuclear localization of the pre-integration complex. Its function is as follows. Constituent of the pre-integration complex (PIC) which tethers the latter to mitotic chromosomes. This allows the integration of the viral genome into the host DNA. In terms of biological role, forms the spherical core of the virion that encapsulates the genomic RNA-nucleocapsid complex. Functionally, involved in the packaging and encapsidation of two copies of the genome. Binds with high affinity to conserved UCUG elements within the packaging signal, located near the 5'-end of the genome. This binding is dependent on genome dimerization. Acts as a nucleic acid chaperone which is involved in rearrangement of nucleic acid secondary structures during gRNA retrotranscription. The aspartyl protease mediates proteolytic cleavages of Gag and Gag-Pol polyproteins during or shortly after the release of the virion from the plasma membrane. Cleavages take place as an ordered, step-wise cascade to yield mature proteins. This process is called maturation. Displays maximal activity during the budding process just prior to particle release from the cell (Potential). Cleaves the translation initiation factor eIF4G leading to the inhibition of host cap-dependent translation. Its function is as follows. RT is a multifunctional enzyme that converts the viral dimeric RNA genome into dsDNA in the cytoplasm, shortly after virus entry into the cell. This enzyme displays a DNA polymerase activity that can copy either DNA or RNA templates, and a ribonuclease H (RNase H) activity that cleaves the RNA strand of RNA-DNA heteroduplexes in a partially processive 3' to 5' endonucleasic mode. Conversion of viral genomic RNA into dsDNA requires many steps. A tRNA binds to the primer-binding site (PBS) situated at the 5' end of the viral RNA. RT uses the 3' end of the tRNA primer to perform a short round of RNA-dependent minus-strand DNA synthesis. The reading proceeds through the U5 region and ends after the repeated (R) region which is present at both ends of viral RNA. The portion of the RNA-DNA heteroduplex is digested by the RNase H, resulting in a ssDNA product attached to the tRNA primer. This ssDNA/tRNA hybridizes with the identical R region situated at the 3' end of viral RNA. This template exchange, known as minus-strand DNA strong stop transfer, can be either intra- or intermolecular. RT uses the 3' end of this newly synthesized short ssDNA to perform the RNA-dependent minus-strand DNA synthesis of the whole template. RNase H digests the RNA template except for a polypurine tract (PPT) situated at the 5' end of the genome. It is not clear if both polymerase and RNase H activities are simultaneous. RNase H probably can proceed both in a polymerase-dependent (RNA cut into small fragments by the same RT performing DNA synthesis) and a polymerase-independent mode (cleavage of remaining RNA fragments by free RTs). Secondly, RT performs DNA-directed plus-strand DNA synthesis using the PPT that has not been removed by RNase H as primers. PPT and tRNA primers are then removed by RNase H. The 3' and 5' ssDNA PBS regions hybridize to form a circular dsDNA intermediate. Strand displacement synthesis by RT to the PBS and PPT ends produces a blunt ended, linear dsDNA copy of the viral genome that includes long terminal repeats (LTRs) at both ends. In terms of biological role, catalyzes viral DNA integration into the host chromosome, by performing a series of DNA cutting and joining reactions. This enzyme activity takes place after virion entry into a cell and reverse transcription of the RNA genome in dsDNA. The first step in the integration process is 3' processing. This step requires a complex comprising the viral genome, matrix protein and integrase. This complex is called the pre-integration complex (PIC). The integrase protein removes 2 nucleotides from each 3' end of the viral DNA, leaving recessed CA OH's at the 3' ends. In the second step that requires cell division, the PIC enters cell nucleus. In the third step, termed strand transfer, the integrase protein joins the previously processed 3' ends to the 5' ends of strands of target cellular DNA at the site of integration. The last step is viral DNA integration into host chromosome. The chain is Gag-Pol polyprotein (pol) from Mus musculus (Mouse).